An 861-amino-acid polypeptide reads, in one-letter code: Actin-binding LIM protein 1 (861 aa).

4 LIM zinc-binding domains span residues 97-156 (IHCH…MYGT), 156-216 (TRCH…MSSS), 224-283 (SNCA…LFGV), and 283-343 (VKCE…TKTE). Ser-216 bears the Phosphoserine mark. Residues 374-414 (LQLLSPPCLTNSNKNPRQPTRTSSESIYSRPGSSIPGSPGH) are disordered. Polar residues predominate over residues 381 to 400 (CLTNSNKNPRQPTRTSSESI). A compositionally biased stretch (low complexity) spans 404-413 (PGSSIPGSPG). Ser-411 carries the post-translational modification Phosphoserine. Tyr-417 and Tyr-440 each carry phosphotyrosine. Disordered stretches follow at residues 459–590 (EDKQ…PTYA) and 634–682 (FPAA…ELLR). Phosphoserine is present on residues Ser-466, Ser-470, and Ser-475. The span at 467-478 (LGESPRTLSPTP) shows a compositional bias: polar residues. Position 477 is a phosphothreonine (Thr-477). Ser-479 is subject to Phosphoserine. The residue at position 483 (Tyr-483) is a Phosphotyrosine. Positions 493-518 (RSTSQGSINSPVYSRHSYTPTTSRSP) are enriched in polar residues. Phosphoserine is present on residues Ser-496, Ser-499, and Ser-502. Residues 536-546 (PLRTSSFSSTH) show a composition bias toward low complexity. 2 positions are modified to phosphoserine: Ser-582 and Ser-671. Residues 673–723 (REEDEEELLRRRQLQEEQLMKLNSGLGQLILKEEMEKESRERASLASRYDS) are a coiled coil. A Glycyl lysine isopeptide (Lys-Gly) (interchain with G-Cter in SUMO2) cross-link involves residue Lys-704. A disordered region spans residues 713 to 748 (ERASLASRYDSPLHSASHAPSSKTSSLPGYGKNGLH). Residues Ser-723, Ser-738, Ser-760, and Ser-789 each carry the phosphoserine modification. A compositionally biased stretch (low complexity) spans 724 to 738 (PLHSASHAPSSKTSS). Positions 793-861 (MLEPKIFPYE…NDMKKKAKLF (69 aa)) constitute an HP domain.

As to quaternary structure, binds F-actin. Interacts with ABRA. As to expression, isoform 1 is detected in adult retina, where it is highly expressed in the ganglion layer. Detected in rod inner segment. Isoform 2 is highly expressed in adult retina, brain, kidney and heart. Isoform 3 is highly expressed in adult retina, brain, kidney, liver, skeletal muscle, spleen and heart. Detected in embryonic retina, brain, spinal cord, peripheral sensory ganglia and thymus.

It is found in the cytoplasm. The protein localises to the cytoskeleton. In terms of biological role, may act as scaffold protein. May play a role in the development of the retina. Has been suggested to play a role in axon guidance. The protein is Actin-binding LIM protein 1 (Ablim1) of Mus musculus (Mouse).